The sequence spans 544 residues: Probable protein kinase UbiB (544 aa).

In terms of domain architecture, Protein kinase spans 123–505 (EFDEQALASA…GRQKSHNVRS (383 aa)). ATP-binding positions include 129 to 137 (LASASIAQV) and K156. D291 serves as the catalytic Proton acceptor. A helical transmembrane segment spans residues 522-540 (LPLWLSCGTLVTVLLVLLL).

This sequence belongs to the ABC1 family. UbiB subfamily.

The protein resides in the cell inner membrane. The protein operates within cofactor biosynthesis; ubiquinone biosynthesis [regulation]. In terms of biological role, is probably a protein kinase regulator of UbiI activity which is involved in aerobic coenzyme Q (ubiquinone) biosynthesis. The polypeptide is Probable protein kinase UbiB (Actinobacillus pleuropneumoniae serotype 5b (strain L20)).